A 565-amino-acid chain; its full sequence is MWRLRLLVLAVLAAGSAEAQANSSDGFLEFSVGKFTYFVLSKSSPQEAVLRHISSNVTFLLFQIHSQYQNTTVSFTKTLLPSTSGTGNDRGLVFILRPEQAVCTWYLETGDTKPVQSVALTLSYSERDPIPGGCNLEFDLDIDPNLYLDYNFFETTIKFAPANIGYARATEPPPCDVSTSRESRWRLRYDVYQYFLPEGDLTEASLLHHLQRMAQVAQVKASAIKVATLTADDKTAVSFSSLPGQGVIYNVIVWDPSLNTSAAYVPVHTYACSFESVDGNCASPGRVSTKVFSTLFALLGLFVCFFGHRFWKTDLFFVGFIFLGFFFYILITRLTPLQYDVRLALTAVAGSFGGLLLVASWWRFGILTLCMLCVGLVLGFLVSSGTFFTPLGNLNVFHDDGVFWVTFSCIALLVPVIFMGCLRILNILACGVVGSYSVVLAVNSYMFTSLSYITLNVLRRALNTDFRGAFIRVPFQTNDYIILAVWGMLAVSGITLQIRRERGQPPFPPHPYKLWKQERERRVTNILDPSHHIPPLRERLYGRVARIKELFQKEQPAGERTPLLL.

The signal sequence occupies residues 1–21; the sequence is MWRLRLLVLAVLAAGSAEAQA. N-linked (GlcNAc...) asparagine glycosylation is found at Asn22, Asn56, Asn70, and Asn259. The next 7 helical transmembrane spans lie at 287–307, 315–335, 341–361, 364–384, 402–422, 427–447, and 478–498; these read VSTK…CFFG, LFFV…TRLT, VRLA…VASW, FGIL…LVSS, VFWV…MGCL, ILAC…SYMF, and NDYI…TLQI.

The protein resides in the cell membrane. Its function is as follows. Involved in the inhibition of cytokine-induced death of pancreatic beta cells. Involved in the promotion of insulin secretion from pancreatic beta cells. Is a downstream transcriptional target of p53/TP53, and acts as a pro-survival homeostatic factor that attenuates the development of cellular stress. Maintains protein homeostasis and promotes cell survival through attenuation of endoplasmic reticulum (ER) stress and the subsequent induction of unfolded protein response (UPR). The sequence is that of Transmembrane 7 superfamily member 3 (Tm7sf3) from Mus musculus (Mouse).